Reading from the N-terminus, the 216-residue chain is Peroxiredoxin (216 aa).

In terms of domain architecture, Thioredoxin spans Val-2 to Ile-158. Residue Cys-46 is the Cysteine sulfenic acid (-SOH) intermediate of the active site. Residue Arg-121 participates in substrate binding. Cys-205 and Cys-211 are oxidised to a cystine.

Belongs to the peroxiredoxin family. Prx6 subfamily. In terms of assembly, homodecamer. Pentamer of dimers that assemble into a ring structure.

The protein resides in the cytoplasm. It carries out the reaction a hydroperoxide + [thioredoxin]-dithiol = an alcohol + [thioredoxin]-disulfide + H2O. Functionally, thiol-specific peroxidase that catalyzes the reduction of hydrogen peroxide and organic hydroperoxides to water and alcohols, respectively. Plays a role in cell protection against oxidative stress by detoxifying peroxides. The protein is Peroxiredoxin (ahpC) of Pyrococcus horikoshii (strain ATCC 700860 / DSM 12428 / JCM 9974 / NBRC 100139 / OT-3).